The sequence spans 289 residues: MDEKDWILLKILHEEQSVTKTAERLFTSQPSITYRLKKIEEIFGIELFTKRHKGITFTAEGEHLVAYARRMLQELQDTKDHISNLSKEVQGHLRLGVSSNFAQYKLPKLLREFSTMYPNVQYSVQTGWSTDVMKLLDAGIVQVGILRGSHRWKGVEERLTREKLHIISKKPITIEQLPFLPFIKYKTDASLKTIIEDWMHTNLKQAPIIAMEVDRQETCKEMVKHGLGYSIAPEICLQESDHLYTMELYNAKGKPLMRDTWLMYDQKSLGIKLVKAFIDFLKGEQMVTI.

The 58-residue stretch at 1 to 58 folds into the HTH lysR-type domain; that stretch reads MDEKDWILLKILHEEQSVTKTAERLFTSQPSITYRLKKIEEIFGIELFTKRHKGITFT. Residues 18–37 constitute a DNA-binding region (H-T-H motif); sequence VTKTAERLFTSQPSITYRLK.

The protein belongs to the LysR transcriptional regulatory family.

This is an uncharacterized protein from Bacillus subtilis (strain 168).